The sequence spans 136 residues: uncharacterized protein (136 aa).

2 disordered regions span residues 23–44 (QESL…KEDN) and 56–95 (DGVI…ESAR). Residues 61–79 (SEEGCSSSGEKENSGLCSE) are compositionally biased toward low complexity. Positions 80–91 (ESSEEDPEEAEE) are enriched in acidic residues.

This is an uncharacterized protein from Saccharomyces cerevisiae (strain ATCC 204508 / S288c) (Baker's yeast).